A 561-amino-acid polypeptide reads, in one-letter code: DNA ligase B (561 aa).

The active-site N6-AMP-lysine intermediate is the Lys125.

This sequence belongs to the NAD-dependent DNA ligase family. LigB subfamily.

It catalyses the reaction NAD(+) + (deoxyribonucleotide)n-3'-hydroxyl + 5'-phospho-(deoxyribonucleotide)m = (deoxyribonucleotide)n+m + AMP + beta-nicotinamide D-nucleotide.. Its function is as follows. Catalyzes the formation of phosphodiester linkages between 5'-phosphoryl and 3'-hydroxyl groups in double-stranded DNA using NAD as a coenzyme and as the energy source for the reaction. The protein is DNA ligase B of Escherichia coli O127:H6 (strain E2348/69 / EPEC).